A 119-amino-acid polypeptide reads, in one-letter code: MICOS complex subunit MIC13 (119 aa).

Residues 1–7 are Mitochondrial matrix-facing; sequence MVARVWS. A helical membrane pass occupies residues 8–26; the sequence is LMRFLIKGSVAGGAVYLVY. Residues 27-119 are Mitochondrial intermembrane-facing; sequence DQELLGPSDK…GWEYLKEHSK (93 aa).

This sequence belongs to the MICOS complex subunit Mic13 family. As to quaternary structure, component of the mitochondrial contact site and cristae organizing system (MICOS) complex, composed of at least MICOS10/MIC10, CHCHD3/MIC19, CHCHD6/MIC25, APOO/MIC26, MICOS13/MIC13, APOOL/MIC27 and IMMT/MIC60. The MICOS complex associates with mitochondrial outer membrane proteins SAMM50, MTX1 and MTX2 (together described as components of the mitochondrial outer membrane sorting assembly machinery (SAM) complex) and DNAJC11, mitochondrial inner membrane protein TMEM11 and with HSPA9. The MICOS and SAM complexes together with DNAJC11 are part of a large protein complex spanning both membranes termed the mitochondrial intermembrane space bridging (MIB) complex.

It localises to the mitochondrion inner membrane. Component of the MICOS complex, a large protein complex of the mitochondrial inner membrane that plays crucial roles in the maintenance of crista junctions, inner membrane architecture, and formation of contact sites to the outer membrane. Constituent of mature MICOS complex, it is required for the formation of cristae junction (CJ) and maintenance of cristae morphology. Required for the incorporation of MICOS10/MIC10 into the MICOS complex. The sequence is that of MICOS complex subunit MIC13 (Micos13) from Mus musculus (Mouse).